We begin with the raw amino-acid sequence, 242 residues long: uncharacterized protein (242 aa).

Positions 1 to 12 are enriched in basic and acidic residues; sequence MKLRRERFERRN. The segment at 1–21 is disordered; sequence MKLRRERFERRNGSGKNSQSS. Over 1-23 the chain is Cytoplasmic; the sequence is MKLRRERFERRNGSGKNSQSSSS. The helical transmembrane segment at 24–44 threads the bilayer; sequence WMVTFTDLITLILVFFILLFS. Residues 45–242 are Extracellular-facing; sequence MSQIDLQKFK…VIKKSKTTSS (198 aa). The tract at residues 64-91 is disordered; the sequence is GNGLQPDQTSIEKKNTSPSDTKKQEDQQ. The span at 73–89 shows a compositional bias: basic and acidic residues; that stretch reads SIEKKNTSPSDTKKQED. In terms of domain architecture, OmpA-like spans 117–238; sequence ERGVVLVLQE…RVEIVIKKSK (122 aa).

This sequence belongs to the MotB family.

The protein resides in the cell membrane. In terms of biological role, may be involved in some transport function. This is an uncharacterized protein from Bacillus subtilis (strain 168).